The sequence spans 786 residues: Myosin light chain kinase 3 (786 aa).

Ser155 is modified (phosphoserine). Disordered regions lie at residues 233-258 (EALDPGQEPPPTEAESRLPALASEDT), 279-315 (RMSQSAGEGTSSSKPDCSEPGPQPLGPLTTDSDIHSD), and 333-443 (ELFE…GRRV). Residues 279–293 (RMSQSAGEGTSSSKP) show a composition bias toward polar residues. Phosphoserine occurs at positions 341 and 422. Residues 482–737 (VSQHEVLGGG…ATQCLKHEWL (256 aa)) form the Protein kinase domain. ATP contacts are provided by residues 488–496 (LGGGRFGQV) and Lys511. The active-site Proton acceptor is the Asp603.

Belongs to the protein kinase superfamily. CAMK Ser/Thr protein kinase family. The cofactor is Mg(2+). Phosphorylated on serine residues. Expressed in cardiomyocytes (at protein level). Up-regulated in heart after experimental myocardial infarction at the mRNA level.

The protein localises to the cytoplasm. It catalyses the reaction L-seryl-[myosin light chain] + ATP = O-phospho-L-seryl-[myosin light chain] + ADP + H(+). It carries out the reaction L-threonyl-[myosin light chain] + ATP = O-phospho-L-threonyl-[myosin light chain] + ADP + H(+). Its function is as follows. Calmodulin-dependent kinase that phosphorylates MYL2 in vitro. Promotes sarcomere formation in cardiomyocytes. Increases cardiomyocyte contractility. In Rattus norvegicus (Rat), this protein is Myosin light chain kinase 3 (Mylk3).